The sequence spans 412 residues: Protein arginine N-methyltransferase 2 (412 aa).

Over residues 48 to 65 the composition is skewed to basic and acidic residues; sequence EKNRNGDKEFRESTDDNK. Disordered regions lie at residues 48–69 and 169–189; these read EKNR…TSNT and SVQT…DDAT. A phosphoserine mark is found at serine 181 and serine 184. The RMT2 domain maps to 189–412; sequence TAANQQVYLK…YYYHPRITFA (224 aa). S-adenosyl-L-methionine contacts are provided by residues tyrosine 196, methionine 226, 250 to 255, 271 to 273, 298 to 299, and aspartate 319; these read FGMGII, EAH, and WQ.

The protein belongs to the class I-like SAM-binding methyltransferase superfamily. RMT2 methyltransferase family. As to quaternary structure, monomer. Interacts with nucleoporins NUP49, NUP57 and NUP100.

The protein resides in the cytoplasm. Its subcellular location is the nucleus. Its function is as follows. S-adenosyl-L-methionine-dependent protein-arginine N-methyltransferase that methylates the delta-nitrogen atom of arginine residues to form N5-methylarginine (type IV) in target proteins. Monomethylates ribosomal protein L12 (RPL12A/RPL12B) at 'Arg-67'. In Saccharomyces cerevisiae (strain ATCC 204508 / S288c) (Baker's yeast), this protein is Protein arginine N-methyltransferase 2.